A 320-amino-acid polypeptide reads, in one-letter code: Ubiquinone biosynthesis protein COQ4, mitochondrial (320 aa).

The N-terminal 31 residues, 1-31 (MFARSALGRSDQLVTALNSQKRQFVLTAATT), are a transit peptide targeting the mitochondrion. Positions 205, 206, 209, and 221 each coordinate Zn(2+).

This sequence belongs to the COQ4 family. Component of a multi-subunit COQ enzyme complex, composed of at least COQ3, COQ4, COQ5, COQ6, COQ7 and COQ9. The cofactor is Zn(2+).

It is found in the mitochondrion inner membrane. It carries out the reaction a 4-hydroxy-3-methoxy-5-(all-trans-polyprenyl)benzoate + H(+) = a 2-methoxy-6-(all-trans-polyprenyl)phenol + CO2. It functions in the pathway cofactor biosynthesis; ubiquinone biosynthesis. Its function is as follows. Lyase that catalyzes the C1-decarboxylation of 4-hydroxy-3-methoxy-5-(all-trans-polyprenyl)benzoic acid into 2-methoxy-6-(all-trans-polyprenyl)phenol during ubiquinone biosynthesis. This chain is Ubiquinone biosynthesis protein COQ4, mitochondrial, found in Scheffersomyces stipitis (strain ATCC 58785 / CBS 6054 / NBRC 10063 / NRRL Y-11545) (Yeast).